The chain runs to 97 residues: YcgL domain-containing protein PSEEN4034 (97 aa).

In terms of domain architecture, YcgL spans 3 to 87 (RICSIYKSPR…PDDDYIEHLP (85 aa)).

In Pseudomonas entomophila (strain L48), this protein is YcgL domain-containing protein PSEEN4034.